The primary structure comprises 241 residues: Urease accessory protein UreF 1 (241 aa).

Belongs to the UreF family. UreD, UreF and UreG form a complex that acts as a GTP-hydrolysis-dependent molecular chaperone, activating the urease apoprotein by helping to assemble the nickel containing metallocenter of UreC. The UreE protein probably delivers the nickel.

Its subcellular location is the cytoplasm. In terms of biological role, required for maturation of urease via the functional incorporation of the urease nickel metallocenter. The polypeptide is Urease accessory protein UreF 1 (Brucella melitensis biotype 1 (strain ATCC 23456 / CCUG 17765 / NCTC 10094 / 16M)).